We begin with the raw amino-acid sequence, 615 residues long: 1-deoxy-D-xylulose-5-phosphate synthase (615 aa).

Thiamine diphosphate is bound by residues histidine 76 and 117–119; that span reads GHS. Aspartate 148 lines the Mg(2+) pocket. Thiamine diphosphate-binding positions include 149-150, asparagine 177, tyrosine 284, and glutamate 365; that span reads GA. Asparagine 177 is a Mg(2+) binding site.

This sequence belongs to the transketolase family. DXPS subfamily. Homodimer. The cofactor is Mg(2+). Thiamine diphosphate serves as cofactor.

It carries out the reaction D-glyceraldehyde 3-phosphate + pyruvate + H(+) = 1-deoxy-D-xylulose 5-phosphate + CO2. It participates in metabolic intermediate biosynthesis; 1-deoxy-D-xylulose 5-phosphate biosynthesis; 1-deoxy-D-xylulose 5-phosphate from D-glyceraldehyde 3-phosphate and pyruvate: step 1/1. Functionally, catalyzes the acyloin condensation reaction between C atoms 2 and 3 of pyruvate and glyceraldehyde 3-phosphate to yield 1-deoxy-D-xylulose-5-phosphate (DXP). This chain is 1-deoxy-D-xylulose-5-phosphate synthase, found in Francisella tularensis subsp. novicida (strain U112).